Consider the following 175-residue polypeptide: Capsid protein (175 aa).

Residues 1 to 35 (MFRQEMARYPKKSIKKRRVGRRKYGSKAATSHDYS) form a disordered region. The span at 9 to 25 (YPKKSIKKRRVGRRKYG) shows a compositional bias: basic residues.

This sequence belongs to the nanoviridae capsid protein family.

The protein resides in the virion. The chain is Capsid protein (DNA-S) from Musa (BBTV).